Consider the following 275-residue polypeptide: Calcyphosin (275 aa).

The tract at residues 59-87 (PGTTQLTQGPAGRTLGQTQASCPEPRPSM) is disordered. EF-hand domains lie at 107 to 142 (SGIQ…LGLV), 143 to 178 (LDQA…PMSQ), 179 to 214 (AREA…RAHP), and 222 to 258 (TEDE…VSAS). The Ca(2+) site is built by Asp120, Asp122, Ser124, Ser126, Glu131, Asp156, Asn158, Ser160, Thr162, Glu167, Asp192, Ser194, Asp196, and Asp203. Ser126 bears the Phosphoserine; by PKA mark.

In terms of assembly, monomer. Does not form oligomers in the presence of calcium.

The protein resides in the cytoplasm. Functionally, calcium-binding protein. May play a role in cellular signaling events (Potential). The protein is Calcyphosin of Homo sapiens (Human).